We begin with the raw amino-acid sequence, 267 residues long: Large ribosomal subunit protein uL2c (267 aa).

The protein belongs to the universal ribosomal protein uL2 family. In terms of assembly, part of the 50S ribosomal subunit.

It localises to the plastid. The protein localises to the apicoplast. The protein is Large ribosomal subunit protein uL2c (rpl2) of Toxoplasma gondii.